A 524-amino-acid chain; its full sequence is Cytochrome P450 monooxygenase drtD (524 aa).

A helical membrane pass occupies residues 2-22 (SDTYLVAASGLAVCFFVLYLL). C418 is a binding site for heme.

This sequence belongs to the cytochrome P450 family. The cofactor is heme.

It is found in the membrane. It functions in the pathway secondary metabolite biosynthesis; terpenoid biosynthesis. Its function is as follows. Cytochrome P450 monooxygenase; part of the gene cluster that mediates the biosynthesis of various drimane-type sesquiterpene esters, compounds that exhibit diverse biological activities and are widely present in eukaryotes. The pathway begins with the synthesis of the backbone drimenol by the terpene cyclase drtB using farnesyl pyrophosphate (FPP) as substrate. The cytochrome P450 monooxygenase drtD is then responsible for the hydroxylations at C-6, C-9 and C-12, as well as the oxidation of hydroxyl groups at C-6 and C-11 to a ketone and an aldehyde, respectively. Then, the biosynthesis can go in two directions, either the hydroxylated drimenol is further hydroxylated at C-2 and C-3 by an enzyme(s) not associated with the drt cluster, or the FAD-binding oxidoreductase drtC further oxidizes C-11 or C-12 to form the butyrolactone ring. DrtB, drtD and drtC are solely responsible for the formation of the different drimane structures observed during drimane sesquiterpenes biosynthesis. The polyketide synthase drtA synthesizes different lengths (C6 and C8) of PKS chains, which are then oxidized to varying degrees by the short-chain dehydrogenase drtF. Finally, these PKS chains are transferred onto drimane sesquiterpenes by the acyltransferase drtE, forming the sesquiterpene esters. In addition to the different fatty acyl-CoA chains produced by drtA, drtE is also able to use cinnamoyl-CoA as a substrate. This chain is Cytochrome P450 monooxygenase drtD, found in Aspergillus calidoustus.